Reading from the N-terminus, the 428-residue chain is Cytochrome c biogenesis protein CcsB (428 aa).

A run of 3 helical transmembrane segments spans residues 14 to 34 (LKFA…GTFI), 72 to 92 (SLWF…CSFR), and 162 to 182 (IGPL…AYGS).

It belongs to the Ccs1/CcsB family. May interact with CcsA.

Its subcellular location is the cellular thylakoid membrane. Its function is as follows. Required during biogenesis of c-type cytochromes (cytochrome c6 and cytochrome f) at the step of heme attachment. The sequence is that of Cytochrome c biogenesis protein CcsB from Prochlorococcus marinus (strain MIT 9301).